A 541-amino-acid chain; its full sequence is Atlastin (541 aa).

Topologically, residues 1–424 are cytoplasmic; the sequence is MGGSAVQVIN…NIFKAARTPA (424 aa). The GB1/RHD3-type G domain occupies 35-284; it reads DRFVCVVSVA…LVPMLLAPDN (250 aa). Positions 48, 49, 50, 51, and 52 each coordinate GDP. 6 residues coordinate GTP: Arg48, Lys49, Gly50, Lys51, Ser52, and Phe53. Residue Ser52 coordinates Mg(2+). Residue Asp121 participates in Mg(2+) binding. Arg192, Asp193, and Val251 together coordinate GDP. Positions 192, 193, and 251 each coordinate GTP. Residues 322 to 413 form a 3HB (three-helix bundle) domain region; that stretch reads MLVATAEANH…FTNYQAHNES (92 aa). A linker region spans residues 414–422; it reads KNIFKAART. Residues 425–445 form a helical membrane-spanning segment; that stretch reads VYFACAVIMYILSGIFGLVGL. The Lumenal portion of the chain corresponds to 446 to 448; the sequence is YTF. A helical transmembrane segment spans residues 449 to 469; it reads ANFCNLVMGVALLTLALWAYI. Residues 470 to 541 lie on the Cytoplasmic side of the membrane; it reads RYSGELSDFG…NASNGKVKRS (72 aa). Phosphothreonine is present on Thr514.

The protein belongs to the TRAFAC class dynamin-like GTPase superfamily. GB1/RHD3 GTPase family. GB1 subfamily. Monomeric and homodimeric. The homodimer, transiently formed by two molecules on opposing membranes, is the active form mediating ER membrane fusion. Interacts with spas; interaction may regulate microtubule dynamics. In terms of tissue distribution, ubiquitously expressed.

It localises to the endoplasmic reticulum membrane. The protein resides in the golgi apparatus membrane. The enzyme catalyses GTP + H2O = GDP + phosphate + H(+). Its function is as follows. Membrane-anchored GTPase that mediates the GTP-dependent fusion of endoplasmic reticulum (ER) membranes, maintaining the continuous ER network. It facilitates the formation of three-way junctions where ER tubules intersect. Two atlastin-1 on neighboring ER tubules bind GTP and form loose homodimers through the GB1/RHD3-type G domains and 3HB regions. Upon GTP hydrolysis, the 3HB regions tighten, pulling the membranes together to drive their fusion. After fusion, the homodimer disassembles upon release of inorganic phosphate (Pi). Subsequently, GDP dissociates, resetting the monomers to a conformation ready for a new fusion cycle. May also regulate more or less directly Golgi biogenesis. May also regulate microtubule polymerization and Golgi biogenesis. Required for dopaminergic neurons survival and the growth of muscles and synapses at neuromuscular junctions. This chain is Atlastin (atl), found in Drosophila melanogaster (Fruit fly).